The chain runs to 620 residues: Threonine--tRNA ligase (620 aa).

Positions 1–42 (MFEIAKGISNSLAKKSVGAKVDGKNVDMSYILDHDAEVEFID) constitute a TGS domain. The catalytic stretch occupies residues 224 to 515 (DHRKLGKELE…LIEHYAGAFP (292 aa)). Residues Cys-315, His-366, and His-492 each contribute to the Zn(2+) site.

The protein belongs to the class-II aminoacyl-tRNA synthetase family. In terms of assembly, homodimer. The cofactor is Zn(2+).

Its subcellular location is the cytoplasm. The enzyme catalyses tRNA(Thr) + L-threonine + ATP = L-threonyl-tRNA(Thr) + AMP + diphosphate + H(+). In terms of biological role, catalyzes the attachment of threonine to tRNA(Thr) in a two-step reaction: L-threonine is first activated by ATP to form Thr-AMP and then transferred to the acceptor end of tRNA(Thr). Also edits incorrectly charged L-seryl-tRNA(Thr). The protein is Threonine--tRNA ligase of Fusobacterium nucleatum subsp. nucleatum (strain ATCC 25586 / DSM 15643 / BCRC 10681 / CIP 101130 / JCM 8532 / KCTC 2640 / LMG 13131 / VPI 4355).